We begin with the raw amino-acid sequence, 653 residues long: Serine/threonine-protein phosphatase with EF-hands 1 (653 aa).

The IQ domain maps to 16–45 (SLRAALIIQNWYRGYKARLKARQHYALTIF). The tract at residues 121-455 (IDLLLEAFKE…PRFFQYQVTK (335 aa)) is catalytic. Mn(2+) is bound by residues D172, H174, D201, and N233. Residue H234 is the Proton donor of the active site. Mn(2+) is bound by residues H285 and H403. 3 EF-hand domains span residues 483–518 (SRKS…ILGL), 566–601 (RYRS…FSSH), and 606–641 (IDDS…VHRY). Ca(2+) is bound by residues D579, D581, S583, E590, D619, N621, D623, S625, and E630.

This sequence belongs to the PPP phosphatase family. The cofactor is Mn(2+). Mg(2+) serves as cofactor. As to expression, detected in retina and retinal derived Y-79 retinoblastoma cells. Also found in fetal brain.

It catalyses the reaction O-phospho-L-seryl-[protein] + H2O = L-seryl-[protein] + phosphate. It carries out the reaction O-phospho-L-threonyl-[protein] + H2O = L-threonyl-[protein] + phosphate. With respect to regulation, activated by calcium. In terms of biological role, may have a role in the recovery or adaptation response of photoreceptors. May have a role in development. This is Serine/threonine-protein phosphatase with EF-hands 1 (PPEF1) from Homo sapiens (Human).